Reading from the N-terminus, the 262-residue chain is Probable cutinase 1 (262 aa).

An N-terminal signal peptide occupies residues 1-19; it reads MAPLKSLLLGASLATLALS. 2 disulfides stabilise this stretch: cysteine 48/cysteine 127 and cysteine 74/cysteine 88. Serine 138 (nucleophile) is an active-site residue. Cysteines 189 and 196 form a disulfide. Aspartate 193 is a catalytic residue. Histidine 206 (proton donor/acceptor) is an active-site residue. Residues 228–262 form a disordered region; that stretch reads SSSTTSSSSDAASSSSAAGTSSSGLSGLSSFFGGL.

It belongs to the cutinase family.

It localises to the secreted. The enzyme catalyses cutin + H2O = cutin monomers.. Catalyzes the hydrolysis of complex carboxylic polyesters found in the cell wall of plants. Degrades cutin, a macromolecule that forms the structure of the plant cuticle. The protein is Probable cutinase 1 of Aspergillus niger (strain ATCC MYA-4892 / CBS 513.88 / FGSC A1513).